The sequence spans 861 residues: Leucine--tRNA ligase (861 aa).

The 'HIGH' region motif lies at 42–52; the sequence is PYPSGRLHMGH. The 'KMSKS' region motif lies at 619–623; that stretch reads KMSKS. Residue lysine 622 coordinates ATP.

It belongs to the class-I aminoacyl-tRNA synthetase family.

It is found in the cytoplasm. It carries out the reaction tRNA(Leu) + L-leucine + ATP = L-leucyl-tRNA(Leu) + AMP + diphosphate. The polypeptide is Leucine--tRNA ligase (Haemophilus influenzae (strain PittGG)).